Reading from the N-terminus, the 54-residue chain is MLHYSVIFFVIALIAAFFGFSGIAAGAAEIAKILFFVFLIITIVSLVAGIFHKR.

A run of 2 helical transmembrane segments spans residues 6-26 and 30-50; these read VIFF…IAAG and IAKI…VAGI.

It belongs to the UPF0391 family.

The protein resides in the cell membrane. In Methylobacillus flagellatus (strain ATCC 51484 / DSM 6875 / VKM B-1610 / KT), this protein is UPF0391 membrane protein Mfla_0947/Mfla_1091.